A 296-amino-acid polypeptide reads, in one-letter code: Nucleotide-binding protein stu0831 (296 aa).

13-20 contributes to the ATP binding site; it reads GMSGAGKT. 63–66 contacts GTP; sequence DMRS.

Belongs to the RapZ-like family.

Its function is as follows. Displays ATPase and GTPase activities. The chain is Nucleotide-binding protein stu0831 from Streptococcus thermophilus (strain ATCC BAA-250 / LMG 18311).